A 480-amino-acid polypeptide reads, in one-letter code: Type VI lipase adapter protein Tla3 (480 aa).

The interval 410-458 (ISSPTPGKKPVHDPFGVDLLPQTASGDGPPPSADPVAPASRLTTRLPPG) is disordered.

As to quaternary structure, interacts with the Tle3 toxin on one side and with the H2-T6SS component VgrG2b on the other side.

It localises to the cytoplasm. In terms of biological role, adapter protein that targets and loads the Tle3 toxin onto the H2 type VI secretion system (H2-T6SS) machinery through an interaction with the TTR domain of VgrG2b. Seems specific for Tle3. In Pseudomonas aeruginosa (strain ATCC 15692 / DSM 22644 / CIP 104116 / JCM 14847 / LMG 12228 / 1C / PRS 101 / PAO1), this protein is Type VI lipase adapter protein Tla3.